The sequence spans 244 residues: Probable ABC transporter ATP-binding protein in ycf23-apcF intergenic region (244 aa).

Positions 9-241 (LEINNLTVSY…KLSTLFGEHI (233 aa)) constitute an ABC transporter domain. 41–48 (GPNGAGKS) is an ATP binding site.

Belongs to the ABC transporter superfamily.

Its subcellular location is the plastid. The protein resides in the cyanelle. The sequence is that of Probable ABC transporter ATP-binding protein in ycf23-apcF intergenic region from Cyanophora paradoxa.